A 466-amino-acid polypeptide reads, in one-letter code: Asparagine--tRNA ligase (466 aa).

It belongs to the class-II aminoacyl-tRNA synthetase family. In terms of assembly, homodimer.

It localises to the cytoplasm. It carries out the reaction tRNA(Asn) + L-asparagine + ATP = L-asparaginyl-tRNA(Asn) + AMP + diphosphate + H(+). This is Asparagine--tRNA ligase from Shewanella halifaxensis (strain HAW-EB4).